The following is a 320-amino-acid chain: Dual oxidase maturation factor 2 (320 aa).

The chain crosses the membrane as a helical span at residues 22-42; it reads VPLLIVILVFLSLAASFLFIL. Residues 43 to 51 are Cytoplasmic-facing; it reads PGIRGHSRW. Residues 52-72 form a helical membrane-spanning segment; sequence FWLVRVLLSLFIGAEIVAVHF. Residues 73–183 are Extracellular-facing; that stretch reads SGDWFVGRVW…HLAGHYAAAT (111 aa). N-linked (GlcNAc...) asparagine glycosylation is found at asparagine 84, asparagine 109, and asparagine 121. A helical transmembrane segment spans residues 184–204; the sequence is LWVAFCFWIIANALLSMPAPL. Residues 205-206 are Cytoplasmic-facing; it reads YG. The chain crosses the membrane as a helical span at residues 207 to 227; that stretch reads GLALLTTGAFTLFGVFAFASI. Residues 228–249 lie on the Extracellular side of the membrane; that stretch reads SSVPLCHFRLGSAVLTPYYGAS. Residues 250–270 form a helical membrane-spanning segment; the sequence is FWLTLATGILSLLLGGAVVIL. The Cytoplasmic segment spans residues 271 to 320; sequence HYTRPSALRSFLDLSVKDCSNQAKGNSPLTLNNPQHEQLKSPDLNITTLL.

It belongs to the DUOXA family. In terms of assembly, heterodimer with DUXA2; disulfide-linked. Interacts with CSNK1G2. Post-translationally, N-glycosylated.

The protein resides in the endoplasmic reticulum membrane. Required for the maturation and the transport from the endoplasmic reticulum to the plasma membrane of functional DUOX2. May play a role in thyroid hormone synthesis. The chain is Dual oxidase maturation factor 2 (Duoxa2) from Mus musculus (Mouse).